The following is a 613-amino-acid chain: UvrABC system protein C (613 aa).

Residues 12–89 (DHPGVYIMHD…IKQHRPRYNV (78 aa)) enclose the GIY-YIG domain. The region spanning 199–234 (TALVKELKEQMEAAAARLEFEKAARLRDQLRAVQEV) is the UVR domain.

This sequence belongs to the UvrC family. In terms of assembly, interacts with UvrB in an incision complex.

The protein resides in the cytoplasm. In terms of biological role, the UvrABC repair system catalyzes the recognition and processing of DNA lesions. UvrC both incises the 5' and 3' sides of the lesion. The N-terminal half is responsible for the 3' incision and the C-terminal half is responsible for the 5' incision. This is UvrABC system protein C from Moorella thermoacetica (strain ATCC 39073 / JCM 9320).